We begin with the raw amino-acid sequence, 157 residues long: uncharacterized protein (157 aa).

This is an uncharacterized protein from Rickettsia prowazekii (strain Madrid E).